The chain runs to 557 residues: Alpha-glucosidase (557 aa).

Asp201 functions as the Nucleophile in the catalytic mechanism. Catalysis depends on Glu256, which acts as the Proton donor.

It belongs to the glycosyl hydrolase 13 family.

The catalysed reaction is Hydrolysis of terminal, non-reducing (1-&gt;4)-linked alpha-D-glucose residues with release of alpha-D-glucose.. The sequence is that of Alpha-glucosidase (agl) from Pediococcus pentosaceus.